The primary structure comprises 635 residues: tRNA uridine 5-carboxymethylaminomethyl modification enzyme MnmG (635 aa).

15–20 (GAGHAG) is an FAD binding site. 276-290 (GPRYCPSIEDKIVRF) provides a ligand contact to NAD(+).

Belongs to the MnmG family. As to quaternary structure, homodimer. Heterotetramer of two MnmE and two MnmG subunits. Requires FAD as cofactor.

It is found in the cytoplasm. Its function is as follows. NAD-binding protein involved in the addition of a carboxymethylaminomethyl (cmnm) group at the wobble position (U34) of certain tRNAs, forming tRNA-cmnm(5)s(2)U34. In Streptococcus sanguinis (strain SK36), this protein is tRNA uridine 5-carboxymethylaminomethyl modification enzyme MnmG.